The sequence spans 441 residues: ATP-dependent protease ATPase subunit HslU (441 aa).

ATP is bound by residues Ile18, 60–65 (GVGKTE), Asp254, Glu319, and Arg391.

The protein belongs to the ClpX chaperone family. HslU subfamily. A double ring-shaped homohexamer of HslV is capped on each side by a ring-shaped HslU homohexamer. The assembly of the HslU/HslV complex is dependent on binding of ATP.

The protein localises to the cytoplasm. Functionally, ATPase subunit of a proteasome-like degradation complex; this subunit has chaperone activity. The binding of ATP and its subsequent hydrolysis by HslU are essential for unfolding of protein substrates subsequently hydrolyzed by HslV. HslU recognizes the N-terminal part of its protein substrates and unfolds these before they are guided to HslV for hydrolysis. In Actinobacillus succinogenes (strain ATCC 55618 / DSM 22257 / CCUG 43843 / 130Z), this protein is ATP-dependent protease ATPase subunit HslU.